Consider the following 139-residue polypeptide: Intrinsically disordered protein, expressed in pharynx 15 (139 aa).

Over residues 1–12 (MNNNQGMYNTQT) the composition is skewed to polar residues. Positions 1-98 (MNNNQGMYNT…GSSTPSPQYS (98 aa)) are disordered. Low complexity-rich tracts occupy residues 13–41 (TQGYGNNQGSYQNQMMYNNNNPQNTQTTT) and 49–98 (QPQQ…PQYS).

This chain is Intrinsically disordered protein, expressed in pharynx 15, found in Caenorhabditis elegans.